Reading from the N-terminus, the 582-residue chain is Threonine--tRNA ligase (582 aa).

Positions 185–478 (DHRKLGKELE…LTEQYGGAFP (294 aa)) are catalytic. 3 residues coordinate Zn(2+): cysteine 278, histidine 329, and histidine 455.

Belongs to the class-II aminoacyl-tRNA synthetase family. In terms of assembly, homodimer. Zn(2+) serves as cofactor.

Its subcellular location is the cytoplasm. It catalyses the reaction tRNA(Thr) + L-threonine + ATP = L-threonyl-tRNA(Thr) + AMP + diphosphate + H(+). Its function is as follows. Catalyzes the attachment of threonine to tRNA(Thr) in a two-step reaction: L-threonine is first activated by ATP to form Thr-AMP and then transferred to the acceptor end of tRNA(Thr). Also edits incorrectly charged L-seryl-tRNA(Thr). This Dehalococcoides mccartyi (strain CBDB1) protein is Threonine--tRNA ligase.